A 211-amino-acid chain; its full sequence is MPVVAVIDYEMGNLHSVCKGLEKAGATPIITHCHQELTKADAVILPGVGAFDPAVQSLRSRDLEQPIKDTIASGKPFLGICLGLQILFESSAEGNQPGLGIIKGKVRRFVWEPGITIPHMGWNQLELTQPKSILWEHLPPQPWVYFVHSYYVDPFEPQVRAATVTHGTQTVTAAIAHENLMAVQFHPEKSSNIGLQILSNFVSQVREKIAA.

The Glutamine amidotransferase type-1 domain occupies 3–211; it reads VVAVIDYEMG…VSQVREKIAA (209 aa). The active-site Nucleophile is the cysteine 81. Residues histidine 186 and glutamate 188 contribute to the active site.

Heterodimer of HisH and HisF.

Its subcellular location is the cytoplasm. It catalyses the reaction 5-[(5-phospho-1-deoxy-D-ribulos-1-ylimino)methylamino]-1-(5-phospho-beta-D-ribosyl)imidazole-4-carboxamide + L-glutamine = D-erythro-1-(imidazol-4-yl)glycerol 3-phosphate + 5-amino-1-(5-phospho-beta-D-ribosyl)imidazole-4-carboxamide + L-glutamate + H(+). The enzyme catalyses L-glutamine + H2O = L-glutamate + NH4(+). It participates in amino-acid biosynthesis; L-histidine biosynthesis; L-histidine from 5-phospho-alpha-D-ribose 1-diphosphate: step 5/9. In terms of biological role, IGPS catalyzes the conversion of PRFAR and glutamine to IGP, AICAR and glutamate. The HisH subunit catalyzes the hydrolysis of glutamine to glutamate and ammonia as part of the synthesis of IGP and AICAR. The resulting ammonia molecule is channeled to the active site of HisF. The sequence is that of Imidazole glycerol phosphate synthase subunit HisH from Nostoc sp. (strain PCC 7120 / SAG 25.82 / UTEX 2576).